Here is a 501-residue protein sequence, read N- to C-terminus: Glycerol kinase (501 aa).

Thr17 is an ADP binding site. Residues Thr17, Thr18, and Ser19 each contribute to the ATP site. Thr17 contacts sn-glycerol 3-phosphate. Position 21 (Arg21) interacts with ADP. Arg87, Glu88, Tyr139, and Asp243 together coordinate sn-glycerol 3-phosphate. Positions 87, 88, 139, 243, and 244 each coordinate glycerol. Residues Thr265 and Gly308 each coordinate ADP. Residues Thr265, Gly308, Gln312, and Gly409 each contribute to the ATP site. Residues Gly409 and Asn413 each coordinate ADP.

It belongs to the FGGY kinase family.

It catalyses the reaction glycerol + ATP = sn-glycerol 3-phosphate + ADP + H(+). The protein operates within polyol metabolism; glycerol degradation via glycerol kinase pathway; sn-glycerol 3-phosphate from glycerol: step 1/1. Its activity is regulated as follows. Inhibited by fructose 1,6-bisphosphate (FBP). Functionally, key enzyme in the regulation of glycerol uptake and metabolism. Catalyzes the phosphorylation of glycerol to yield sn-glycerol 3-phosphate. This Pseudomonas syringae pv. tomato (strain ATCC BAA-871 / DC3000) protein is Glycerol kinase.